Here is a 675-residue protein sequence, read N- to C-terminus: Rho guanine nucleotide exchange factor 37 (675 aa).

Residues 1–26 are disordered; sequence MAKHGADEPSSRSGSPDREGRASEDR. In terms of domain architecture, DH spans 30 to 213; the sequence is HQRLAVRELI…QDVNTNINEY (184 aa). The region spanning 254–455 is the BAR domain; the sequence is LKQEAGLIPR…LPHHHVPEPA (202 aa). SH3 domains are found at residues 506–569 and 602–665; these read GPGK…LYHV and PTMN…RARS.

May act as a guanine nucleotide exchange factor (GEF). In Homo sapiens (Human), this protein is Rho guanine nucleotide exchange factor 37 (ARHGEF37).